The chain runs to 295 residues: Nucleotide-binding protein EF_0766 (295 aa).

Residue 12–19 participates in ATP binding; it reads GMSGAGKT. GTP is bound at residue 62–65; the sequence is DLRS.

It belongs to the RapZ-like family.

Functionally, displays ATPase and GTPase activities. This chain is Nucleotide-binding protein EF_0766, found in Enterococcus faecalis (strain ATCC 700802 / V583).